The following is a 615-amino-acid chain: Dihydroxy-acid dehydratase (615 aa).

Position 81 (Asp-81) interacts with Mg(2+). Cys-122 is a binding site for [2Fe-2S] cluster. 2 residues coordinate Mg(2+): Asp-123 and Lys-124. N6-carboxylysine is present on Lys-124. Cys-195 serves as a coordination point for [2Fe-2S] cluster. Glu-491 contributes to the Mg(2+) binding site. Ser-517 functions as the Proton acceptor in the catalytic mechanism.

It belongs to the IlvD/Edd family. Homodimer. [2Fe-2S] cluster is required as a cofactor. Mg(2+) serves as cofactor.

It carries out the reaction (2R)-2,3-dihydroxy-3-methylbutanoate = 3-methyl-2-oxobutanoate + H2O. The enzyme catalyses (2R,3R)-2,3-dihydroxy-3-methylpentanoate = (S)-3-methyl-2-oxopentanoate + H2O. Its pathway is amino-acid biosynthesis; L-isoleucine biosynthesis; L-isoleucine from 2-oxobutanoate: step 3/4. It participates in amino-acid biosynthesis; L-valine biosynthesis; L-valine from pyruvate: step 3/4. In terms of biological role, functions in the biosynthesis of branched-chain amino acids. Catalyzes the dehydration of (2R,3R)-2,3-dihydroxy-3-methylpentanoate (2,3-dihydroxy-3-methylvalerate) into 2-oxo-3-methylpentanoate (2-oxo-3-methylvalerate) and of (2R)-2,3-dihydroxy-3-methylbutanoate (2,3-dihydroxyisovalerate) into 2-oxo-3-methylbutanoate (2-oxoisovalerate), the penultimate precursor to L-isoleucine and L-valine, respectively. The sequence is that of Dihydroxy-acid dehydratase from Novosphingobium aromaticivorans (strain ATCC 700278 / DSM 12444 / CCUG 56034 / CIP 105152 / NBRC 16084 / F199).